The following is a 282-amino-acid chain: Probable septum site-determining protein MinC (282 aa).

The disordered stretch occupies residues 103–147 (SQSRRGGKDEAPKEKAGKPEATAASGQTDAEAAGNTGKGKDSEGA). The segment covering 104–120 (QSRRGGKDEAPKEKAGK) has biased composition (basic and acidic residues).

Belongs to the MinC family. In terms of assembly, interacts with MinD and FtsZ.

Its function is as follows. Cell division inhibitor that blocks the formation of polar Z ring septums. Rapidly oscillates between the poles of the cell to destabilize FtsZ filaments that have formed before they mature into polar Z rings. Prevents FtsZ polymerization. The protein is Probable septum site-determining protein MinC of Cupriavidus metallidurans (strain ATCC 43123 / DSM 2839 / NBRC 102507 / CH34) (Ralstonia metallidurans).